Here is a 287-residue protein sequence, read N- to C-terminus: Probable endonuclease 4 (287 aa).

Positions 69, 109, 144, 178, 181, 215, 228, 230, and 260 each coordinate Zn(2+).

This sequence belongs to the AP endonuclease 2 family. It depends on Zn(2+) as a cofactor.

It catalyses the reaction Endonucleolytic cleavage to 5'-phosphooligonucleotide end-products.. In terms of biological role, endonuclease IV plays a role in DNA repair. It cleaves phosphodiester bonds at apurinic or apyrimidinic (AP) sites, generating a 3'-hydroxyl group and a 5'-terminal sugar phosphate. This Thermotoga neapolitana (strain ATCC 49049 / DSM 4359 / NBRC 107923 / NS-E) protein is Probable endonuclease 4.